Reading from the N-terminus, the 383-residue chain is Chorismate synthase (383 aa).

The NADP(+) site is built by Arg40 and Arg46. FMN is bound by residues 128–130 (RAS), Gly291, 306–310 (KPIPT), and Arg332.

Belongs to the chorismate synthase family. As to quaternary structure, homotetramer. It depends on FMNH2 as a cofactor.

It catalyses the reaction 5-O-(1-carboxyvinyl)-3-phosphoshikimate = chorismate + phosphate. It functions in the pathway metabolic intermediate biosynthesis; chorismate biosynthesis; chorismate from D-erythrose 4-phosphate and phosphoenolpyruvate: step 7/7. Its function is as follows. Catalyzes the anti-1,4-elimination of the C-3 phosphate and the C-6 proR hydrogen from 5-enolpyruvylshikimate-3-phosphate (EPSP) to yield chorismate, which is the branch point compound that serves as the starting substrate for the three terminal pathways of aromatic amino acid biosynthesis. This reaction introduces a second double bond into the aromatic ring system. This is Chorismate synthase from Moorella thermoacetica (strain ATCC 39073 / JCM 9320).